A 298-amino-acid chain; its full sequence is GTP cyclohydrolase FolE2 (298 aa).

The protein belongs to the GTP cyclohydrolase IV family.

It catalyses the reaction GTP + H2O = 7,8-dihydroneopterin 3'-triphosphate + formate + H(+). It participates in cofactor biosynthesis; 7,8-dihydroneopterin triphosphate biosynthesis; 7,8-dihydroneopterin triphosphate from GTP: step 1/1. Converts GTP to 7,8-dihydroneopterin triphosphate. The polypeptide is GTP cyclohydrolase FolE2 (Neisseria meningitidis serogroup B (strain ATCC BAA-335 / MC58)).